The chain runs to 158 residues: Small ribosomal subunit protein uS15 (158 aa).

The span at 1–18 (MARMHARKRGKSGSKRPP) shows a compositional bias: basic residues. Positions 1 to 21 (MARMHARKRGKSGSKRPPRTA) are disordered.

Belongs to the universal ribosomal protein uS15 family. Part of the 30S ribosomal subunit.

The chain is Small ribosomal subunit protein uS15 from Pyrococcus abyssi (strain GE5 / Orsay).